The following is a 206-amino-acid chain: Guanylyl cyclase inhibitory protein (206 aa).

A lipid anchor (N-myristoyl glycine) is attached at glycine 2. EF-hand domains are found at residues serine 31–glycine 49, asparagine 51–glycine 86, threonine 87–methionine 122, and threonine 135–valine 170. Aspartate 64, asparagine 66, aspartate 68, glutamate 75, aspartate 100, aspartate 102, aspartate 104, and glutamate 111 together coordinate Ca(2+).

As to expression, retina; inner segments, somata and synaptic terminals of cone receptors.

In terms of biological role, does not stimulate guanylyl cyclase (GC) when free calcium ion concentration is low, but inhibits GC when free calcium ions concentration is elevated. In Lithobates pipiens (Northern leopard frog), this protein is Guanylyl cyclase inhibitory protein (GCIP).